The following is a 623-amino-acid chain: Lethal(3)malignant brain tumor-like protein 4 (623 aa).

Residues 1 to 44 (MKQPNRKRKLNMDSKERLDQDGRLEQAEEEKKPKDSTTPLSHVP) are disordered. A compositionally biased stretch (basic and acidic residues) spans 10–35 (LNMDSKERLDQDGRLEQAEEEKKPKD). 3 MBT repeats span residues 52–152 (WSWE…LHIP), 160–260 (FVWM…LIAP), and 269–364 (FSWT…LEVP). Residues 370–414 (LKILPGQAVCPTPGCRGIGHIRGPRYSGHHSAFGCPYSDMNLKKE) form a CCHHC-type zinc finger. Positions 379, 384, 398, and 404 each coordinate Zn(2+). In terms of domain architecture, SAM spans 543-607 (WTVDEVAEFV…YNSILMFRHS (65 aa)).

The protein resides in the nucleus. Its function is as follows. Putative Polycomb group (PcG) protein. PcG proteins maintain the transcriptionally repressive state of genes, probably via a modification of chromatin, rendering it heritably changed in its expressibility. In Homo sapiens (Human), this protein is Lethal(3)malignant brain tumor-like protein 4 (L3MBTL4).